Reading from the N-terminus, the 249-residue chain is Probable transcriptional regulatory protein Csal_1845 (249 aa).

Belongs to the TACO1 family.

It is found in the cytoplasm. The protein is Probable transcriptional regulatory protein Csal_1845 of Chromohalobacter salexigens (strain ATCC BAA-138 / DSM 3043 / CIP 106854 / NCIMB 13768 / 1H11).